Here is a 164-residue protein sequence, read N- to C-terminus: Cyclic pyranopterin monophosphate synthase (164 aa).

Substrate contacts are provided by residues 75–77 (MAH) and 112–113 (ME). The active site involves Asp127.

This sequence belongs to the MoaC family. In terms of assembly, homohexamer; trimer of dimers.

It carries out the reaction (8S)-3',8-cyclo-7,8-dihydroguanosine 5'-triphosphate = cyclic pyranopterin phosphate + diphosphate. It functions in the pathway cofactor biosynthesis; molybdopterin biosynthesis. In terms of biological role, catalyzes the conversion of (8S)-3',8-cyclo-7,8-dihydroguanosine 5'-triphosphate to cyclic pyranopterin monophosphate (cPMP). This Desulforamulus reducens (strain ATCC BAA-1160 / DSM 100696 / MI-1) (Desulfotomaculum reducens) protein is Cyclic pyranopterin monophosphate synthase.